Reading from the N-terminus, the 146-residue chain is Hemoglobin subunit beta (146 aa).

V1 carries the N-acetylvaline modification. One can recognise a Globin domain in the interval 2-146 (HLTAEEKNAI…VANALAHKYH (145 aa)). Residue T12 is modified to Phosphothreonine. K59 carries the post-translational modification N6-acetyllysine. Residue H63 participates in heme b binding. N6-acetyllysine is present on K82. Residue H92 participates in heme b binding. S-nitrosocysteine is present on C93. K144 carries the post-translational modification N6-acetyllysine.

Belongs to the globin family. As to quaternary structure, heterotetramer of two alpha chains and two beta chains. In terms of tissue distribution, red blood cells.

Involved in oxygen transport from the lung to the various peripheral tissues. The chain is Hemoglobin subunit beta (HBB) from Osphranter rufus (Red kangaroo).